Consider the following 352-residue polypeptide: Rhodopsin, freshwater form (352 aa).

Over 1–36 (MNGTEGPNFYVPMSNVTGVVRSPFEYPQYYLAEPWA) the chain is Extracellular. N-linked (GlcNAc...) asparagine glycosylation is found at Asn2 and Asn15. Residues 37 to 61 (YSALAAYMFFLIIAGFPINFLTLYV) form a helical membrane-spanning segment. Residues 62 to 73 (TIEHKKLRTPLN) lie on the Cytoplasmic side of the membrane. The chain crosses the membrane as a helical span at residues 74–98 (YILLNLAVADLFMVFGGFTTTMYTS). Residues 99-113 (MHGYFVFGPTGCNIE) lie on the Extracellular side of the membrane. An intrachain disulfide couples Cys110 to Cys187. A helical transmembrane segment spans residues 114–133 (GFFATLGGEIALWCLVVLAV). The Cytoplasmic segment spans residues 134–152 (ERWMVVCKPMSNFRFGENH). The helical transmembrane segment at 153–176 (AIMGVAFTWVMALACAAPPLFGWS) threads the bilayer. Residues 177 to 202 (RYIPEGMQCSCGMDHYAPNPETYNES) are Extracellular-facing. Asn200 carries N-linked (GlcNAc...) asparagine glycosylation. The chain crosses the membrane as a helical span at residues 203–230 (FVIYMFICHFTIPLTVISFCYGRLVCTV). Residues 231-252 (KEATAQQQESETTQRAEREVTR) are Cytoplasmic-facing. A helical membrane pass occupies residues 253 to 276 (MVIIMVISFLVCWVPYASVAWYIF). Residues 277 to 284 (THQGSSFG) lie on the Extracellular side of the membrane. Residues 285-309 (PIFMTIPAFFAKSSSLYNPLIYICM) form a helical membrane-spanning segment. N6-(retinylidene)lysine is present on Lys296. Residues 310–352 (NKQSRNCMITTLCCGKNPFEEEEGASTTASKTEASSVSSVSPA) lie on the Cytoplasmic side of the membrane. Residue Cys323 is the site of S-palmitoyl cysteine attachment. Positions 330–352 (EEEGASTTASKTEASSVSSVSPA) are disordered. Residues 334 to 352 (ASTTASKTEASSVSSVSPA) show a composition bias toward low complexity.

The protein belongs to the G-protein coupled receptor 1 family. Opsin subfamily. Phosphorylated on some or all of the serine and threonine residues present in the C-terminal region. In terms of tissue distribution, rod shaped photoreceptor cells which mediates vision in dim light.

It is found in the membrane. Functionally, visual pigments such as rhodopsin and porphyropsin are light-absorbing molecules that mediate vision. Rhodopsin consists of an apoprotein, opsin, covalently linked to 11-cis-retinal. This receptor is coupled to the activation of phospholipase C. Porphyropsin consists of opsin covalently linked to 11-cis 3,4-didehydroretinal. The protein is Rhodopsin, freshwater form of Anguilla anguilla (European freshwater eel).